A 1060-amino-acid chain; its full sequence is Carbamoyl phosphate synthase large chain (1060 aa).

The tract at residues 1-401 (MPKRQDIHKI…SLLKAVRSLE (401 aa)) is carboxyphosphate synthetic domain. ATP contacts are provided by R129, R169, G175, G176, R208, I210, E215, G241, V242, H243, Q284, and E298. The ATP-grasp 1 domain occupies 133 to 327 (KNLMQKLHEP…IAKMAAKIAV (195 aa)). The Mg(2+) site is built by Q284, E298, and N300. Residues Q284, E298, and N300 each coordinate Mn(2+). The oligomerization domain stretch occupies residues 402–546 (VGLIHPERPA…YSTYESSTES (145 aa)). The segment at 547–929 (VKSDKPSVLV…ALYKAFEAAG (383 aa)) is carbamoyl phosphate synthetic domain. In terms of domain architecture, ATP-grasp 2 spans 671–861 (DQVIKSLKLP…LAQVATLAIL (191 aa)). ATP contacts are provided by R707, H746, L748, E752, G777, I778, H779, S780, Q820, and E832. Positions 820, 832, and 834 each coordinate Mg(2+). 3 residues coordinate Mn(2+): Q820, E832, and N834. One can recognise an MGS-like domain in the interval 930–1060 (MHLPQFGRAL…QAFSISPIKS (131 aa)). Residues 930-1060 (MHLPQFGRAL…QAFSISPIKS (131 aa)) form an allosteric domain region.

Belongs to the CarB family. Composed of two chains; the small (or glutamine) chain promotes the hydrolysis of glutamine to ammonia, which is used by the large (or ammonia) chain to synthesize carbamoyl phosphate. Tetramer of heterodimers (alpha,beta)4. It depends on Mg(2+) as a cofactor. Mn(2+) serves as cofactor.

It carries out the reaction hydrogencarbonate + L-glutamine + 2 ATP + H2O = carbamoyl phosphate + L-glutamate + 2 ADP + phosphate + 2 H(+). The enzyme catalyses hydrogencarbonate + NH4(+) + 2 ATP = carbamoyl phosphate + 2 ADP + phosphate + 2 H(+). The protein operates within amino-acid biosynthesis; L-arginine biosynthesis; carbamoyl phosphate from bicarbonate: step 1/1. Its pathway is pyrimidine metabolism; UMP biosynthesis via de novo pathway; (S)-dihydroorotate from bicarbonate: step 1/3. In terms of biological role, large subunit of the glutamine-dependent carbamoyl phosphate synthetase (CPSase). CPSase catalyzes the formation of carbamoyl phosphate from the ammonia moiety of glutamine, carbonate, and phosphate donated by ATP, constituting the first step of 2 biosynthetic pathways, one leading to arginine and/or urea and the other to pyrimidine nucleotides. The large subunit (synthetase) binds the substrates ammonia (free or transferred from glutamine from the small subunit), hydrogencarbonate and ATP and carries out an ATP-coupled ligase reaction, activating hydrogencarbonate by forming carboxy phosphate which reacts with ammonia to form carbamoyl phosphate. In Lacticaseibacillus paracasei (strain ATCC 334 / BCRC 17002 / CCUG 31169 / CIP 107868 / KCTC 3260 / NRRL B-441) (Lactobacillus paracasei), this protein is Carbamoyl phosphate synthase large chain.